The following is a 169-amino-acid chain: Cell division inhibitor SulA (169 aa).

Positions 106 to 112 are ftsZ binding; the sequence is ALRTGNY. The interval 162-169 is lon protease binding; the sequence is KIHSNLYH.

This sequence belongs to the SulA family. Interacts with FtsZ. Post-translationally, is rapidly cleaved and degraded by the Lon protease once DNA damage is repaired.

Its function is as follows. Component of the SOS system and an inhibitor of cell division. Accumulation of SulA causes rapid cessation of cell division and the appearance of long, non-septate filaments. In the presence of GTP, binds a polymerization-competent form of FtsZ in a 1:1 ratio, thus inhibiting FtsZ polymerization and therefore preventing it from participating in the assembly of the Z ring. This mechanism prevents the premature segregation of damaged DNA to daughter cells during cell division. This chain is Cell division inhibitor SulA, found in Salmonella arizonae (strain ATCC BAA-731 / CDC346-86 / RSK2980).